The following is a 126-amino-acid chain: MEKDLKFTTSHEWVRDNGDGTVTVGISDHAQGLLGDVVFVDLPEVDDEVTTGEGFSLVESVKAASDIYSPVTGVIVEINEELEDSPELVNEEPYESGWIARIKLSDSSELESLIPSDTYLESLDEE.

Residues 21 to 103 form the Lipoyl-binding domain; that stretch reads TVTVGISDHA…YESGWIARIK (83 aa). An N6-lipoyllysine modification is found at K62.

Belongs to the GcvH family. The glycine cleavage system is composed of four proteins: P, T, L and H. (R)-lipoate is required as a cofactor.

Functionally, the glycine cleavage system catalyzes the degradation of glycine. The H protein shuttles the methylamine group of glycine from the P protein to the T protein. This is Glycine cleavage system H protein from Aliivibrio fischeri (strain ATCC 700601 / ES114) (Vibrio fischeri).